The primary structure comprises 217 residues: Oxygen-evolving enhancer protein 3, chloroplastic (217 aa).

Disordered regions lie at residues 1–25 (MAQA…RRAG) and 73–95 (PIKL…SDQA). A chloroplast-targeting transit peptide spans 1-63 (MAQAMASMTG…ATGIAGGALA (63 aa)).

It belongs to the PsbQ family.

It is found in the plastid. It localises to the chloroplast thylakoid membrane. In Oryza sativa subsp. indica (Rice), this protein is Oxygen-evolving enhancer protein 3, chloroplastic.